The following is a 235-amino-acid chain: Phosphoribosylaminoimidazole-succinocarboxamide synthase (235 aa).

This sequence belongs to the SAICAR synthetase family.

The enzyme catalyses 5-amino-1-(5-phospho-D-ribosyl)imidazole-4-carboxylate + L-aspartate + ATP = (2S)-2-[5-amino-1-(5-phospho-beta-D-ribosyl)imidazole-4-carboxamido]succinate + ADP + phosphate + 2 H(+). The protein operates within purine metabolism; IMP biosynthesis via de novo pathway; 5-amino-1-(5-phospho-D-ribosyl)imidazole-4-carboxamide from 5-amino-1-(5-phospho-D-ribosyl)imidazole-4-carboxylate: step 1/2. This is Phosphoribosylaminoimidazole-succinocarboxamide synthase from Chlorobaculum parvum (strain DSM 263 / NCIMB 8327) (Chlorobium vibrioforme subsp. thiosulfatophilum).